We begin with the raw amino-acid sequence, 316 residues long: MKFSTLEHILIHLSFSICSIVITIRLINLVVTTILKPYDFSEKGIITTFLCLTGFLVTRWIYSGHFPLSNLYESLIFLSWSFSLIHIVAYLKKNKNLSRITASSTIFTQGFATSGLLTEINKSGILVPALQSEWLIMHVSMMILSYAALLCGSLLSAALLVITCRKKFNELLRLIESLSFDKIQYRNQRIHLFGKTYFFSVKNYYKIQLVQQLDYWSYRVISLGFIFLTMGILSGAVWANEAWGSYWSWDPKETWAFITWIIFAIYLHTRTNKNFWGANSAIVAVIGFLIIWICYFGVNLLGIGLHSYGSFKGMAS.

7 helical membrane passes run 15–35 (FSIC…TTIL), 44–64 (GIIT…IYSG), 71–91 (LYES…VAYL), 142–162 (MILS…LLVI), 220–240 (VISL…VWAN), 247–267 (WSWD…AIYL), and 281–301 (AIVA…VNLL).

This sequence belongs to the CcmF/CycK/Ccl1/NrfE/CcsA family. As to quaternary structure, may interact with Ccs1.

The protein localises to the plastid. Its subcellular location is the chloroplast thylakoid membrane. Functionally, required during biogenesis of c-type cytochromes (cytochrome c6 and cytochrome f) at the step of heme attachment. This is Cytochrome c biogenesis protein CcsA from Trachelium caeruleum (Blue throatwort).